Here is a 477-residue protein sequence, read N- to C-terminus: Glycogen synthase (477 aa).

An ADP-alpha-D-glucose-binding site is contributed by Lys15.

Belongs to the glycosyltransferase 1 family. Bacterial/plant glycogen synthase subfamily.

The enzyme catalyses [(1-&gt;4)-alpha-D-glucosyl](n) + ADP-alpha-D-glucose = [(1-&gt;4)-alpha-D-glucosyl](n+1) + ADP + H(+). It functions in the pathway glycan biosynthesis; glycogen biosynthesis. Its function is as follows. Synthesizes alpha-1,4-glucan chains using ADP-glucose. This is Glycogen synthase from Citrobacter koseri (strain ATCC BAA-895 / CDC 4225-83 / SGSC4696).